We begin with the raw amino-acid sequence, 101 residues long: Small ribosomal subunit protein uS14 (101 aa).

It belongs to the universal ribosomal protein uS14 family. As to quaternary structure, part of the 30S ribosomal subunit. Contacts proteins S3 and S10.

Its function is as follows. Binds 16S rRNA, required for the assembly of 30S particles and may also be responsible for determining the conformation of the 16S rRNA at the A site. The chain is Small ribosomal subunit protein uS14 from Burkholderia lata (strain ATCC 17760 / DSM 23089 / LMG 22485 / NCIMB 9086 / R18194 / 383).